A 547-amino-acid polypeptide reads, in one-letter code: Putative HMP/thiamine import ATP-binding protein YkoD (547 aa).

2 consecutive ABC transporter domains span residues 8–250 and 295–523; these read LTVE…KLGI and LEVS…KAKL. ATP contacts are provided by residues 42-49 and 327-334; these read GPSGCGKS and GPNGTGKS.

It belongs to the ABC transporter superfamily. As to quaternary structure, the complex is composed of two ATP-binding proteins (YkoD), two transmembrane proteins (YkoC and YkoE) and a solute-binding protein (YkoF).

It is found in the cell membrane. Part of the ABC transporter complex YkoCDEF that could transport hydroxymethylpyrimidine (HMP) and/or thiamine. Could also transport other HMP-containing products. Responsible for energy coupling to the transport system. In Bacillus subtilis (strain 168), this protein is Putative HMP/thiamine import ATP-binding protein YkoD (ykoD).